A 430-amino-acid chain; its full sequence is Putative glycylpeptide N-tetradecanoyltransferase 2 (430 aa).

Tetradecanoyl-CoA contacts are provided by residues 47–50 (HKFW), 181–183 (LCV), and 189–193 (SKGLA). The active-site Proton acceptor; via carboxylate is L430.

The protein belongs to the NMT family.

It carries out the reaction N-terminal glycyl-[protein] + tetradecanoyl-CoA = N-tetradecanoylglycyl-[protein] + CoA + H(+). Functionally, may add a myristoyl group to the N-terminal glycine residue of certain cellular proteins. The chain is Putative glycylpeptide N-tetradecanoyltransferase 2 (NMT2) from Arabidopsis thaliana (Mouse-ear cress).